Reading from the N-terminus, the 492-residue chain is Glutamyl-tRNA(Gln) amidotransferase subunit A (492 aa).

Residues K84 and S159 each act as charge relay system in the active site. S183 (acyl-ester intermediate) is an active-site residue.

The protein belongs to the amidase family. GatA subfamily. In terms of assembly, heterotrimer of A, B and C subunits.

The catalysed reaction is L-glutamyl-tRNA(Gln) + L-glutamine + ATP + H2O = L-glutaminyl-tRNA(Gln) + L-glutamate + ADP + phosphate + H(+). Functionally, allows the formation of correctly charged Gln-tRNA(Gln) through the transamidation of misacylated Glu-tRNA(Gln) in organisms which lack glutaminyl-tRNA synthetase. The reaction takes place in the presence of glutamine and ATP through an activated gamma-phospho-Glu-tRNA(Gln). This Anaeromyxobacter sp. (strain K) protein is Glutamyl-tRNA(Gln) amidotransferase subunit A.